We begin with the raw amino-acid sequence, 622 residues long: 1-deoxy-D-xylulose-5-phosphate synthase (622 aa).

Residues His-80 and 121 to 123 (GHS) contribute to the thiamine diphosphate site. Position 152 (Asp-152) interacts with Mg(2+). Residues 153-154 (GA), Asn-181, Tyr-288, and Glu-369 each bind thiamine diphosphate. A Mg(2+)-binding site is contributed by Asn-181.

This sequence belongs to the transketolase family. DXPS subfamily. Homodimer. Mg(2+) serves as cofactor. It depends on thiamine diphosphate as a cofactor.

The catalysed reaction is D-glyceraldehyde 3-phosphate + pyruvate + H(+) = 1-deoxy-D-xylulose 5-phosphate + CO2. It participates in metabolic intermediate biosynthesis; 1-deoxy-D-xylulose 5-phosphate biosynthesis; 1-deoxy-D-xylulose 5-phosphate from D-glyceraldehyde 3-phosphate and pyruvate: step 1/1. Its function is as follows. Catalyzes the acyloin condensation reaction between C atoms 2 and 3 of pyruvate and glyceraldehyde 3-phosphate to yield 1-deoxy-D-xylulose-5-phosphate (DXP). The protein is 1-deoxy-D-xylulose-5-phosphate synthase of Psychromonas ingrahamii (strain DSM 17664 / CCUG 51855 / 37).